The primary structure comprises 274 residues: Urease accessory protein UreD (274 aa).

This sequence belongs to the UreD family. In terms of assembly, ureD, UreF and UreG form a complex that acts as a GTP-hydrolysis-dependent molecular chaperone, activating the urease apoprotein by helping to assemble the nickel containing metallocenter of UreC. The UreE protein probably delivers the nickel.

The protein localises to the cytoplasm. In terms of biological role, required for maturation of urease via the functional incorporation of the urease nickel metallocenter. The sequence is that of Urease accessory protein UreD from Lachnoclostridium phytofermentans (strain ATCC 700394 / DSM 18823 / ISDg) (Clostridium phytofermentans).